We begin with the raw amino-acid sequence, 262 residues long: Putative non-heme bromoperoxidase BpoC (262 aa).

Substrate contacts are provided by residues Arg21, 87–88 (SM), and Arg120. Ser87 is an active-site residue. Residues Asp211 and His239 contribute to the active site. His239 is a binding site for substrate.

The protein belongs to the AB hydrolase superfamily. As to quaternary structure, homodimer.

In Mycobacterium tuberculosis (strain CDC 1551 / Oshkosh), this protein is Putative non-heme bromoperoxidase BpoC (bpoC).